The sequence spans 422 residues: Serine--tRNA ligase (422 aa).

Thr229–Glu231 contacts L-serine. Arg260–Glu262 contributes to the ATP binding site. Glu283 serves as a coordination point for L-serine. Glu347 to Ser350 lines the ATP pocket. Ser383 provides a ligand contact to L-serine.

Belongs to the class-II aminoacyl-tRNA synthetase family. Type-1 seryl-tRNA synthetase subfamily. Homodimer. The tRNA molecule binds across the dimer.

Its subcellular location is the cytoplasm. It carries out the reaction tRNA(Ser) + L-serine + ATP = L-seryl-tRNA(Ser) + AMP + diphosphate + H(+). The catalysed reaction is tRNA(Sec) + L-serine + ATP = L-seryl-tRNA(Sec) + AMP + diphosphate + H(+). It participates in aminoacyl-tRNA biosynthesis; selenocysteinyl-tRNA(Sec) biosynthesis; L-seryl-tRNA(Sec) from L-serine and tRNA(Sec): step 1/1. Its function is as follows. Catalyzes the attachment of serine to tRNA(Ser). Is also able to aminoacylate tRNA(Sec) with serine, to form the misacylated tRNA L-seryl-tRNA(Sec), which will be further converted into selenocysteinyl-tRNA(Sec). The protein is Serine--tRNA ligase of Geotalea uraniireducens (strain Rf4) (Geobacter uraniireducens).